The primary structure comprises 289 residues: ATP synthase gamma chain (289 aa).

The protein belongs to the ATPase gamma chain family. As to quaternary structure, F-type ATPases have 2 components, CF(1) - the catalytic core - and CF(0) - the membrane proton channel. CF(1) has five subunits: alpha(3), beta(3), gamma(1), delta(1), epsilon(1). CF(0) has three main subunits: a, b and c.

It localises to the cell inner membrane. Produces ATP from ADP in the presence of a proton gradient across the membrane. The gamma chain is believed to be important in regulating ATPase activity and the flow of protons through the CF(0) complex. The polypeptide is ATP synthase gamma chain (Coxiella burnetii (strain CbuK_Q154) (Coxiella burnetii (strain Q154))).